Reading from the N-terminus, the 303-residue chain is Ribosomal protein L11 methyltransferase (303 aa).

Positions 144, 165, 187, and 235 each coordinate S-adenosyl-L-methionine.

This sequence belongs to the methyltransferase superfamily. PrmA family.

It is found in the cytoplasm. It carries out the reaction L-lysyl-[protein] + 3 S-adenosyl-L-methionine = N(6),N(6),N(6)-trimethyl-L-lysyl-[protein] + 3 S-adenosyl-L-homocysteine + 3 H(+). Its function is as follows. Methylates ribosomal protein L11. The sequence is that of Ribosomal protein L11 methyltransferase from Prochlorococcus marinus (strain MIT 9301).